Here is a 430-residue protein sequence, read N- to C-terminus: Enolase (430 aa).

Gln165 contacts (2R)-2-phosphoglycerate. Residue Glu207 is the Proton donor of the active site. The Mg(2+) site is built by Asp244, Glu287, and Asp314. (2R)-2-phosphoglycerate-binding residues include Lys339, Arg368, Ser369, and Lys390. Residue Lys339 is the Proton acceptor of the active site.

It belongs to the enolase family. As to quaternary structure, component of the RNA degradosome, a multiprotein complex involved in RNA processing and mRNA degradation. The cofactor is Mg(2+).

The protein localises to the cytoplasm. It localises to the secreted. The protein resides in the cell surface. It catalyses the reaction (2R)-2-phosphoglycerate = phosphoenolpyruvate + H2O. It functions in the pathway carbohydrate degradation; glycolysis; pyruvate from D-glyceraldehyde 3-phosphate: step 4/5. Functionally, catalyzes the reversible conversion of 2-phosphoglycerate (2-PG) into phosphoenolpyruvate (PEP). It is essential for the degradation of carbohydrates via glycolysis. This is Enolase from Xanthomonas euvesicatoria pv. vesicatoria (strain 85-10) (Xanthomonas campestris pv. vesicatoria).